The following is a 273-amino-acid chain: Shikimate dehydrogenase (NADP(+)) (273 aa).

Shikimate is bound by residues serine 18–serine 20 and threonine 65. Lysine 69 (proton acceptor) is an active-site residue. Glutamate 81 provides a ligand contact to NADP(+). Shikimate contacts are provided by asparagine 90 and aspartate 105. NADP(+)-binding positions include glycine 130–alanine 134, asparagine 154–lysine 159, and methionine 217. Tyrosine 219 provides a ligand contact to shikimate. NADP(+) is bound at residue glycine 240.

Belongs to the shikimate dehydrogenase family. Homodimer.

The enzyme catalyses shikimate + NADP(+) = 3-dehydroshikimate + NADPH + H(+). It functions in the pathway metabolic intermediate biosynthesis; chorismate biosynthesis; chorismate from D-erythrose 4-phosphate and phosphoenolpyruvate: step 4/7. In terms of biological role, involved in the biosynthesis of the chorismate, which leads to the biosynthesis of aromatic amino acids. Catalyzes the reversible NADPH linked reduction of 3-dehydroshikimate (DHSA) to yield shikimate (SA). The sequence is that of Shikimate dehydrogenase (NADP(+)) from Herminiimonas arsenicoxydans.